Here is a 363-residue protein sequence, read N- to C-terminus: 3-isopropylmalate dehydrogenase (363 aa).

79-92 (GPKWEHLPPNDQPE) lines the NAD(+) pocket. Residues arginine 100, arginine 110, arginine 139, and aspartate 228 each contribute to the substrate site. 3 residues coordinate Mg(2+): aspartate 228, aspartate 252, and aspartate 256. 286-298 (GSAPDIAGKNIAN) contacts NAD(+).

The protein belongs to the isocitrate and isopropylmalate dehydrogenases family. LeuB type 1 subfamily. Homodimer. Requires Mg(2+) as cofactor. Mn(2+) is required as a cofactor.

It is found in the cytoplasm. The enzyme catalyses (2R,3S)-3-isopropylmalate + NAD(+) = 4-methyl-2-oxopentanoate + CO2 + NADH. Its pathway is amino-acid biosynthesis; L-leucine biosynthesis; L-leucine from 3-methyl-2-oxobutanoate: step 3/4. Functionally, catalyzes the oxidation of 3-carboxy-2-hydroxy-4-methylpentanoate (3-isopropylmalate) to 3-carboxy-4-methyl-2-oxopentanoate. The product decarboxylates to 4-methyl-2 oxopentanoate. The protein is 3-isopropylmalate dehydrogenase of Vibrio vulnificus (strain YJ016).